The following is a 202-amino-acid chain: ATP-dependent Clp protease proteolytic subunit 1 (202 aa).

Residue serine 102 is the Nucleophile of the active site. Histidine 127 is an active-site residue.

It belongs to the peptidase S14 family. In terms of assembly, fourteen ClpP subunits assemble into 2 heptameric rings which stack back to back to give a disk-like structure with a central cavity, resembling the structure of eukaryotic proteasomes.

Its subcellular location is the cytoplasm. It carries out the reaction Hydrolysis of proteins to small peptides in the presence of ATP and magnesium. alpha-casein is the usual test substrate. In the absence of ATP, only oligopeptides shorter than five residues are hydrolyzed (such as succinyl-Leu-Tyr-|-NHMec, and Leu-Tyr-Leu-|-Tyr-Trp, in which cleavage of the -Tyr-|-Leu- and -Tyr-|-Trp bonds also occurs).. Its function is as follows. Cleaves peptides in various proteins in a process that requires ATP hydrolysis. Has a chymotrypsin-like activity. Plays a major role in the degradation of misfolded proteins. This is ATP-dependent Clp protease proteolytic subunit 1 from Agrobacterium fabrum (strain C58 / ATCC 33970) (Agrobacterium tumefaciens (strain C58)).